The primary structure comprises 237 residues: Cyclic-di-GMP-binding biofilm dispersal mediator protein (237 aa).

10–34 provides a ligand contact to NAD(+); sequence LILGGSRGIGAAIVRRFVTDGANVR. A substrate-binding site is contributed by Ser-132. Residue Tyr-146 is the Proton acceptor of the active site.

Belongs to the short-chain dehydrogenases/reductases (SDR) family.

In terms of biological role, increases biofilm dispersal. Acts by binding directly to the signaling molecule cyclic-di-GMP, which decreases the intracellular concentration of cyclic-di-GMP and leads to biofilm dispersal. Also controls other biofilm-related phenotypes such as cell motility, cell size, cell aggregation and production of extracellular DNA and extracellular polysaccharides (EPS). Does not act as a phosphodiesterase. The sequence is that of Cyclic-di-GMP-binding biofilm dispersal mediator protein (bdcA) from Escherichia coli (strain K12).